Here is a 325-residue protein sequence, read N- to C-terminus: Glycerol-3-phosphate dehydrogenase [NAD(P)+] (325 aa).

NADPH contacts are provided by tryptophan 11, arginine 30, and lysine 103. The sn-glycerol 3-phosphate site is built by lysine 103, glycine 131, and serine 133. Alanine 135 is an NADPH binding site. Residues lysine 186, aspartate 242, serine 252, arginine 253, and asparagine 254 each contribute to the sn-glycerol 3-phosphate site. The active-site Proton acceptor is the lysine 186. Arginine 253 contributes to the NADPH binding site. NADPH-binding residues include valine 279 and glutamate 281.

Belongs to the NAD-dependent glycerol-3-phosphate dehydrogenase family.

The protein localises to the cytoplasm. The enzyme catalyses sn-glycerol 3-phosphate + NAD(+) = dihydroxyacetone phosphate + NADH + H(+). The catalysed reaction is sn-glycerol 3-phosphate + NADP(+) = dihydroxyacetone phosphate + NADPH + H(+). It participates in membrane lipid metabolism; glycerophospholipid metabolism. Functionally, catalyzes the reduction of the glycolytic intermediate dihydroxyacetone phosphate (DHAP) to sn-glycerol 3-phosphate (G3P), the key precursor for phospholipid synthesis. The sequence is that of Glycerol-3-phosphate dehydrogenase [NAD(P)+] from Wolbachia pipientis subsp. Culex pipiens (strain wPip).